A 915-amino-acid polypeptide reads, in one-letter code: Protein translocase subunit SecA (915 aa).

Residues glutamine 87, 105-109 (GEGKT), and aspartate 516 contribute to the ATP site. The interval 854–915 (QKMQMRHEQL…KYKNCHGQLE (62 aa)) is disordered. Zn(2+) is bound by residues cysteine 899, cysteine 901, cysteine 910, and histidine 911.

Belongs to the SecA family. Monomer and homodimer. Part of the essential Sec protein translocation apparatus which comprises SecA, SecYEG and auxiliary proteins SecDF-YajC and YidC. Zn(2+) serves as cofactor.

The protein resides in the cell inner membrane. Its subcellular location is the cytoplasm. It carries out the reaction ATP + H2O + cellular proteinSide 1 = ADP + phosphate + cellular proteinSide 2.. In terms of biological role, part of the Sec protein translocase complex. Interacts with the SecYEG preprotein conducting channel. Has a central role in coupling the hydrolysis of ATP to the transfer of proteins into and across the cell membrane, serving both as a receptor for the preprotein-SecB complex and as an ATP-driven molecular motor driving the stepwise translocation of polypeptide chains across the membrane. The polypeptide is Protein translocase subunit SecA (Cellvibrio japonicus (strain Ueda107) (Pseudomonas fluorescens subsp. cellulosa)).